Consider the following 669-residue polypeptide: DNA ligase (669 aa).

Residues 33–37 (DVTYD), 82–83 (SL), and Glu-115 each bind NAD(+). The active-site N6-AMP-lysine intermediate is the Lys-117. Arg-138, Glu-172, Lys-286, and Lys-310 together coordinate NAD(+). Zn(2+) contacts are provided by Cys-401, Cys-404, Cys-417, and Cys-422. Residues 589-669 (IDSSFLFGKK…DIKNLVNLDD (81 aa)) enclose the BRCT domain.

It belongs to the NAD-dependent DNA ligase family. LigA subfamily. The cofactor is Mg(2+). Requires Mn(2+) as cofactor.

The enzyme catalyses NAD(+) + (deoxyribonucleotide)n-3'-hydroxyl + 5'-phospho-(deoxyribonucleotide)m = (deoxyribonucleotide)n+m + AMP + beta-nicotinamide D-nucleotide.. Functionally, DNA ligase that catalyzes the formation of phosphodiester linkages between 5'-phosphoryl and 3'-hydroxyl groups in double-stranded DNA using NAD as a coenzyme and as the energy source for the reaction. It is essential for DNA replication and repair of damaged DNA. In Borrelia recurrentis (strain A1), this protein is DNA ligase.